The sequence spans 309 residues: Probable 5-dehydro-4-deoxyglucarate dehydratase (309 aa).

The protein belongs to the DapA family.

The enzyme catalyses 5-dehydro-4-deoxy-D-glucarate + H(+) = 2,5-dioxopentanoate + CO2 + H2O. Its pathway is carbohydrate acid metabolism; D-glucarate degradation; 2,5-dioxopentanoate from D-glucarate: step 2/2. The sequence is that of Probable 5-dehydro-4-deoxyglucarate dehydratase from Saccharopolyspora erythraea (strain ATCC 11635 / DSM 40517 / JCM 4748 / NBRC 13426 / NCIMB 8594 / NRRL 2338).